Reading from the N-terminus, the 370-residue chain is MAPKLQAQFDAVKVLNDTQSKFEMVQILDENGNVVNEDLVPDLTDEQLVELMERMVWTRILDQRSISLNRQGRLGFYAPTAGQEASQLASQYALEKEDYILPGYRDVPQIIWHGLPLTEAFLFSRGHFKGNQFPEGVNALSPQIIIGAQYIQAAGVAFALKKRGKNAVAITYTGDGGSSQGDFYEGINFAAAYKAPAIFVIQNNNYAISTPRSKQTAAETLAQKAIAVGIPGIQVDGMDALAVYQATKEARDRAVAGEGPTLIETMTYRYGPHTMAGDDPTRYRTSDEDAEWEKKDPLVRFRKFLENKGLWNEDKENEVIERAKADIKAAIKEADNTEKQTVTSLMEIMYEDMPQNLAEQYEIYKEKESK.

Heterodimer of an alpha and a beta chain. Thiamine diphosphate is required as a cofactor.

It carries out the reaction N(6)-[(R)-lipoyl]-L-lysyl-[protein] + pyruvate + H(+) = N(6)-[(R)-S(8)-acetyldihydrolipoyl]-L-lysyl-[protein] + CO2. The pyruvate dehydrogenase complex catalyzes the overall conversion of pyruvate to acetyl-CoA and CO(2). It contains multiple copies of three enzymatic components: pyruvate dehydrogenase (E1), dihydrolipoamide acetyltransferase (E2) and lipoamide dehydrogenase (E3). This Staphylococcus aureus (strain COL) protein is Pyruvate dehydrogenase E1 component subunit alpha (pdhA).